The sequence spans 424 residues: Putative chloroquine resistance transporter (424 aa).

Over 1–57 (MKILKKKKKGNQQIVPDERYRELDSHAPNENEIADEAPMSRKILYYLKLVYHEIREN) the chain is Cytoplasmic. The helical transmembrane segment at 58-78 (ITIYLLIILYLCVCVMNKIMA) threads the bilayer. At 79 to 89 (KRTLKKIGNYS) the chain is on the vacuolar side. Residue Asn-87 is glycosylated (N-linked (GlcNAc...) asparagine). A helical transmembrane segment spans residues 90-110 (FVTSETHNTICMVVFFSLYFI). Topologically, residues 111-124 (FGRRVTSAKERHQN) are cytoplasmic. Residues 125-145 (FGLQFLLISLLDACSVIIAFI) form a helical membrane-spanning segment. Topologically, residues 146–153 (GLTRTTGN) are vacuolar. The helical transmembrane segment at 154–174 (IQSFVMQLSIPINMFFCFLIL) threads the bilayer. Residues 175-179 (RYRYH) are Cytoplasmic-facing. A helical membrane pass occupies residues 180–200 (LFNYVGASIIVLTIAIVEFIL). The Vacuolar segment spans residues 201–208 (SFETQEEN). A helical transmembrane segment spans residues 209–229 (SIVFNLVLIASLIPMSFSNMT). Over 230-246 (REIVFKKYKINILRLNA) the chain is Cytoplasmic. A helical transmembrane segment spans residues 247–267 (VVSFFQIFTSCLMLPMYTLPF). Topologically, residues 268 to 316 (LKQINLPFSEIGTNIKNGFRCLILGQNTIVENCGLGMAKMCDDCEGAWK) are vacuolar. Intrachain disulfides connect Cys-288/Cys-311 and Cys-300/Cys-308. Residues 317-337 (TFLAYSFFNICDNLITSFIID) form a helical membrane-spanning segment. Residues 338 to 345 (KFSTMTYT) lie on the Cytoplasmic side of the membrane. Residues 346 to 366 (IVSCIQGPAIAIAYYFKFLAG) form a helical membrane-spanning segment. The Vacuolar portion of the chain corresponds to 367–376 (DAVMKPRVLD). A helical membrane pass occupies residues 377 to 397 (FVTLFGYLFGSIIYRVGNIIL). Over 398–424 (EKKKMMEAGNDDDSEGELTNAESIITQ) the chain is Cytoplasmic.

This sequence belongs to the CRT-like transporter family.

It localises to the vacuole membrane. Nutrient transporter. Involved in maintaining the osmotic homeostasis of the digestive vacuole. The protein is Putative chloroquine resistance transporter of Plasmodium knowlesi.